Consider the following 404-residue polypeptide: Rhomboid-related protein 3 (404 aa).

EF-hand domains lie at 34 to 69 (APED…HSSK) and 70 to 105 (LDPH…KRSN). 7 consecutive transmembrane segments (helical) span residues 164–184 (WFMI…GVLL), 227–247 (LGLN…VHGA), 250–270 (IGLV…VADM), 274–294 (VVGS…NIVM), 305–324 (LLRM…RAVW), 338–358 (PSFV…VVVL), and 371–391 (WWIF…WNIF). The Nucleophile role is filled by Ser-278. His-343 is a catalytic residue.

The protein belongs to the peptidase S54 family.

Its subcellular location is the membrane. The enzyme catalyses Cleaves type-1 transmembrane domains using a catalytic dyad composed of serine and histidine that are contributed by different transmembrane domains.. May be involved in regulated intramembrane proteolysis and the subsequent release of functional polypeptides from their membrane anchors. This Mus musculus (Mouse) protein is Rhomboid-related protein 3 (Rhbdl3).